The chain runs to 208 residues: MALGQRLFITMSRGAGRVQGTLQALVFLGVLVGMVVPSPAGARANGTLLDSRGWGTLLSRSRAGLAGEISGVNWESGYLVGIKRQRRLYCNVGIGFHLQVPPDGRISGTHEENPYSLLEISTVERGVVSLFGVKSALFIAMNSKGRLYTTPSFHDECKFRETLLPNNYNAYESDLYRGTYIALSKYGRVKRGSKVSPIMTVTHFLPRI.

A signal peptide spans 1–37 (MALGQRLFITMSRGAGRVQGTLQALVFLGVLVGMVVP). Asn45 carries an N-linked (GlcNAc...) asparagine glycan. Cys90 and Cys157 are disulfide-bonded.

This sequence belongs to the heparin-binding growth factors family. In terms of assembly, interacts with FGFR1, FGFR2 and FGFR4. Affinity between fibroblast growth factors (FGFs) and their receptors is increased by heparan sulfate glycosaminoglycans that function as coreceptors. In terms of tissue distribution, embryos, adult muscles and adult testis.

Its subcellular location is the secreted. It localises to the extracellular space. Plays an important role in the regulation of cell proliferation, cell differentiation, angiogenesis and myogenesis, and is required for normal muscle regeneration. This Mus musculus (Mouse) protein is Fibroblast growth factor 6 (Fgf6).